Consider the following 96-residue polypeptide: Co-chaperonin GroES (96 aa).

It belongs to the GroES chaperonin family. As to quaternary structure, heptamer of 7 subunits arranged in a ring. Interacts with the chaperonin GroEL.

The protein localises to the cytoplasm. Together with the chaperonin GroEL, plays an essential role in assisting protein folding. The GroEL-GroES system forms a nano-cage that allows encapsulation of the non-native substrate proteins and provides a physical environment optimized to promote and accelerate protein folding. GroES binds to the apical surface of the GroEL ring, thereby capping the opening of the GroEL channel. The protein is Co-chaperonin GroES of Albidiferax ferrireducens (strain ATCC BAA-621 / DSM 15236 / T118) (Rhodoferax ferrireducens).